Here is a 145-residue protein sequence, read N- to C-terminus: UPF0201 protein SSO1042 (145 aa).

Belongs to the UPF0201 family.

This chain is UPF0201 protein SSO1042, found in Saccharolobus solfataricus (strain ATCC 35092 / DSM 1617 / JCM 11322 / P2) (Sulfolobus solfataricus).